Consider the following 464-residue polypeptide: Phospho-cellobiase (464 aa).

Glu-172 serves as the catalytic Proton donor. Glu-361 acts as the Nucleophile in catalysis.

This sequence belongs to the glycosyl hydrolase 1 family.

This is Phospho-cellobiase (casB) from Klebsiella oxytoca.